A 225-amino-acid chain; its full sequence is Putative membrane protease YugP (225 aa).

H95 provides a ligand contact to Zn(2+). The active site involves E96. Residues H99 and H103 each contribute to the Zn(2+) site. A run of 3 helical transmembrane segments spans residues 116-138 (IFPVVNFASGVAPLLFLGGMLLG), 140-162 (LNLIGLGIILFSAAVFFQLITLP), and 192-212 (VLSAAALTYVAAALVSLFELL).

The protein localises to the cell membrane. This chain is Putative membrane protease YugP (yugP), found in Bacillus subtilis (strain 168).